A 285-amino-acid polypeptide reads, in one-letter code: 1-acyl-sn-glycerol-3-phosphate acyltransferase alpha (285 aa).

The signal sequence occupies residues 1-28 (MELWPGAWTALLLLLLLLLSTLWFCSSS). Residues 29 to 34 (AKYFFK) lie on the Lumenal side of the membrane. A helical transmembrane segment spans residues 35-55 (MAFYNGWILFLAILAIPVCAV). At 56–124 (RGRNVENMKI…PDRCVPIAKR (69 aa)) the chain is on the cytoplasmic side. The HXXXXD motif signature appears at 101–106 (HQSSLD). Residues 125 to 145 (ELLWAGSAGLACWLAGIIFID) traverse the membrane as a helical segment. Residues 146 to 189 (RKRTGDAISVMSEVAQTLLTQDVRVWVFPEGTRNHNGSMLPFKR) are Lumenal-facing. Positions 175 to 178 (EGTR) match the EGTR motif motif.

The protein belongs to the 1-acyl-sn-glycerol-3-phosphate acyltransferase family. In terms of tissue distribution, widely expressed.

It localises to the endoplasmic reticulum membrane. It catalyses the reaction a 1-acyl-sn-glycero-3-phosphate + an acyl-CoA = a 1,2-diacyl-sn-glycero-3-phosphate + CoA. The catalysed reaction is 1-(9Z-octadecenoyl)-sn-glycero-3-phosphate + (9Z)-octadecenoyl-CoA = 1,2-di-(9Z-octadecenoyl)-sn-glycero-3-phosphate + CoA. The enzyme catalyses 1-(9Z-octadecenoyl)-sn-glycero-3-phosphate + hexadecanoyl-CoA = 1-(9Z)-octadecenoyl-2-hexadecanoyl-sn-glycero-3-phosphate + CoA. It carries out the reaction heptadecanoyl-CoA + 1-(9Z-octadecenoyl)-sn-glycero-3-phosphate = 1-(9Z)-octadecenoyl-2-heptadecanoyl-sn-glycero-3-phosphate + CoA. It catalyses the reaction 1-(9Z-octadecenoyl)-sn-glycero-3-phosphate + octadecanoyl-CoA = 1-(9Z-octadecenoyl)-2-octadecanoyl-sn-glycero-3-phosphate + CoA. The catalysed reaction is 1-(9Z-octadecenoyl)-sn-glycero-3-phosphate + (9Z,12Z)-octadecadienoyl-CoA = 1-(9Z)-octadecenoyl-2-(9Z,12Z)-octadecadienoyl-sn-glycero-3-phosphate + CoA. The enzyme catalyses 1-(9Z-octadecenoyl)-sn-glycero-3-phosphate + tetradecanoyl-CoA = 1-(9Z)-octadecenoyl-2-tetradecanoyl-sn-glycero-3-phosphate + CoA. It carries out the reaction pentadecanoyl-CoA + 1-(9Z-octadecenoyl)-sn-glycero-3-phosphate = 1-(9Z)-octadecenoyl-2-pentadecanoyl-sn-glycero-3-phosphate + CoA. It catalyses the reaction 1-hexadecanoyl-sn-glycero-3-phosphate + (9Z)-octadecenoyl-CoA = 1-hexadecanoyl-2-(9Z-octadecenoyl)-sn-glycero-3-phosphate + CoA. The catalysed reaction is 1-(9Z,12Z,15Z)-octadecatrienoyl-sn-glycero-3-phosphate + (9Z)-octadecenoyl-CoA = 1-(9Z,12Z,15Z)-octadecatrienoyl-2-(9Z)-octadecenoyl-sn-glycero-3-phosphate + CoA. The enzyme catalyses 1-(6Z,9Z,12Z-octadecatrienoyl)-sn-glycero-3-phosphate + (9Z)-octadecenoyl-CoA = (6Z,9Z,12Z)-octadecatrienoyl-2-(9Z)-octadecenoyl-sn-glycero-3-phosphate + CoA. It carries out the reaction 1-eicosanoyl-sn-glycero-3-phosphate + (9Z)-octadecenoyl-CoA = 1-eicosanoyl-2-(9Z)-octadecenoyl-sn-glycero-3-phosphate + CoA. It catalyses the reaction 1-tetradecanoyl-sn-glycerol 3-phosphate + (9Z)-octadecenoyl-CoA = 1-tetradecanoyl-2-(9Z)-octadecenoyl-sn-glycero-3-phosphate + CoA. The catalysed reaction is 1-(9Z-octadecenoyl)-sn-glycero-3-phosphate + (5Z,8Z,11Z,14Z)-eicosatetraenoyl-CoA = 1-(9Z)-octadecenoyl-2-(5Z,8Z,11Z,14Z)-eicosatetraenoyl-sn-glycero-3-phosphate + CoA. The enzyme catalyses 1-(9Z-octadecenoyl)-sn-glycero-3-phosphate + dodecanoyl-CoA = 1-(9Z)-octadecenoyl-2-dodecanoyl-sn-glycero-3-phosphate + CoA. It carries out the reaction (6Z)-octadecenoyl-CoA + 1-(9Z-octadecenoyl)-sn-glycero-3-phosphate = 1-(9Z)-octadecenoyl-2-(6Z)-octadecenoyl-sn-glycero-3-phosphate + CoA. It catalyses the reaction (11Z)-octadecenoyl-CoA + 1-(9Z-octadecenoyl)-sn-glycero-3-phosphate = 1-(9Z)-octadecenoyl-2-(11Z)-octadecenoyl-sn-glycero-3-phosphate + CoA. The catalysed reaction is (9Z)-hexadecenoyl-CoA + 1-(9Z-octadecenoyl)-sn-glycero-3-phosphate = 1-(9Z-octadecenoyl)-2-(9Z-hexadecenoyl)-sn-glycero-3-phosphate + CoA. Its pathway is phospholipid metabolism; CDP-diacylglycerol biosynthesis; CDP-diacylglycerol from sn-glycerol 3-phosphate: step 2/3. Converts 1-acyl-sn-glycerol-3-phosphate (lysophosphatidic acid or LPA) into 1,2-diacyl-sn-glycerol-3-phosphate (phosphatidic acid or PA) by incorporating an acyl moiety at the sn-2 position of the glycerol backbone. This is 1-acyl-sn-glycerol-3-phosphate acyltransferase alpha (Agpat1) from Mus musculus (Mouse).